The primary structure comprises 402 residues: Plasminogen activator inhibitor 1 (402 aa).

A signal peptide spans 1-23 (MQMSPALTCLVLGLALVFGEGSA). Residues asparagine 232, asparagine 288, and asparagine 352 are each glycosylated (N-linked (GlcNAc...) asparagine).

It belongs to the serpin family. In terms of assembly, forms a heterodimer with TMPRSS7. Interacts with VTN. Binds LRP1B; binding is followed by internalization and degradation. Interacts with PPP1CB. In complex with PLAU/uPA, interacts with PLAUR/uPAR. Interacts with SORL1 and LRP1, either alone or in complex with PLAU; these interactions are abolished in the presence of LRPAP1/RAP. The ternary complex composed of PLAUR-PLAU-PAI1 also interacts with SORL1. Interacts with PLAT/tPA. Also interacts with SORL1, when complexed to PLAT/tPA. In terms of processing, inactivated by proteolytic attack of the urokinase-type (u-PA) and the tissue-type (TPA), cleaving the 369-Arg-|-Met-370 bond. Expressed in endothelial cells. Found in plasma, platelets, and hepatoma and fibrosarcoma cells.

It localises to the secreted. Functionally, serine protease inhibitor. Inhibits TMPRSS7. Is a primary inhibitor of tissue-type plasminogen activator (PLAT) and urokinase-type plasminogen activator (PLAU). As PLAT inhibitor, it is required for fibrinolysis down-regulation and is responsible for the controlled degradation of blood clots. As PLAU inhibitor, it is involved in the regulation of cell adhesion and spreading. Acts as a regulator of cell migration, independently of its role as protease inhibitor. It is required for stimulation of keratinocyte migration during cutaneous injury repair. It is involved in cellular and replicative senescence. Plays a role in alveolar type 2 cells senescence in the lung. Is involved in the regulation of cementogenic differentiation of periodontal ligament stem cells, and regulates odontoblast differentiation and dentin formation during odontogenesis. This chain is Plasminogen activator inhibitor 1 (SERPINE1), found in Homo sapiens (Human).